Reading from the N-terminus, the 442-residue chain is UBX domain-containing protein 6 (442 aa).

The mediates interaction with LMAN1 stretch occupies residues 1–10; that stretch reads MKKFFQEIKA. The disordered stretch occupies residues 13 to 111; it reads KFKSAGPGQK…TNSVPEPKEE (99 aa). Serine 36 is modified (phosphoserine). Residues 51 to 63 form a VCP/p97-interacting motif (VIM) region; the sequence is EAQMAAAAALARL. Low complexity predominate over residues 52-61; it reads AQMAAAAALA. Over residues 90 to 105 the composition is skewed to polar residues; sequence EATSSNNPGAPGTNSV. The 70-residue stretch at 175-244 folds into the PUB domain; the sequence is VDTIAKYLDN…GQEEFYVLGE (70 aa). The 77-residue stretch at 332–408 folds into the UBX domain; it reads RKYTYALVRV…GLVPSALLTF (77 aa).

Interacts with VCP through the PUB domain (via C-terminus) and VIM motif (via N-terminus); the interaction is direct. Forms a ternary complex with CAV1 and VCP. Interacts with SYVN1. Interacts with HERPUD1. Interacts with VCPKMT. May interact with DERL1. Interacts with PLAA, VCP and YOD1; may form a complex involved in macroautophagy. Interacts with LMAN1. Widely expressed (at protein level). Highest expression in brain (at protein level).

The protein resides in the cytoplasm. It is found in the cytosol. The protein localises to the membrane. It localises to the nucleus. Its subcellular location is the cytoskeleton. The protein resides in the microtubule organizing center. It is found in the centrosome. The protein localises to the early endosome membrane. It localises to the late endosome membrane. Its subcellular location is the lysosome membrane. May negatively regulate the ATPase activity of VCP, an ATP-driven segregase that associates with different cofactors to control a wide variety of cellular processes. As a cofactor of VCP, it may play a role in the transport of CAV1 to lysosomes for degradation. It may also play a role in endoplasmic reticulum-associated degradation (ERAD) of misfolded proteins. Together with VCP and other cofactors, it may play a role in macroautophagy, regulating for instance the clearance of damaged lysosomes. This Mus musculus (Mouse) protein is UBX domain-containing protein 6.